Here is a 167-residue protein sequence, read N- to C-terminus: NADH-quinone oxidoreductase subunit B (167 aa).

Residues Cys-40, Cys-41, Cys-105, and Cys-134 each coordinate [4Fe-4S] cluster.

Belongs to the complex I 20 kDa subunit family. As to quaternary structure, NDH-1 is composed of 14 different subunits. Subunits NuoB, C, D, E, F, and G constitute the peripheral sector of the complex. It depends on [4Fe-4S] cluster as a cofactor.

Its subcellular location is the cell inner membrane. It carries out the reaction a quinone + NADH + 5 H(+)(in) = a quinol + NAD(+) + 4 H(+)(out). Its function is as follows. NDH-1 shuttles electrons from NADH, via FMN and iron-sulfur (Fe-S) centers, to quinones in the respiratory chain. The immediate electron acceptor for the enzyme in this species is believed to be ubiquinone. Couples the redox reaction to proton translocation (for every two electrons transferred, four hydrogen ions are translocated across the cytoplasmic membrane), and thus conserves the redox energy in a proton gradient. The protein is NADH-quinone oxidoreductase subunit B of Campylobacter jejuni subsp. jejuni serotype O:2 (strain ATCC 700819 / NCTC 11168).